A 642-amino-acid chain; its full sequence is uncharacterized protein (642 aa).

The Cytoplasmic portion of the chain corresponds to 1–15; that stretch reads MVHITLGQAIWVSVK. Residues 16 to 36 form a helical membrane-spanning segment; the sequence is PIIKIYLIIGVGFLMAKMGIL. The Extracellular segment spans residues 37–42; the sequence is TVEATR. A helical membrane pass occupies residues 43–63; that stretch reads IISDIVLTVLLPSLSFNKIVA. Residues 64–73 are Cytoplasmic-facing; that stretch reads NIEDKDIKSV. A helical transmembrane segment spans residues 74 to 94; the sequence is GIICLSALLIFGSGFFFAYVV. The Extracellular portion of the chain corresponds to 95–104; it reads RLFLPVPKQW. Residues 105–125 form a helical membrane-spanning segment; it reads YGGILAGGMFPNISDLPIAYL. The Cytoplasmic portion of the chain corresponds to 126–142; sequence QSMDQGLVFSEEEGNKG. A helical transmembrane segment spans residues 143–163; the sequence is VANVIIFLTMFLICIFNLGGF. The Extracellular segment spans residues 164 to 460; sequence RLIESDFEYN…FLKNCLRPCS (297 aa). Disordered regions lie at residues 183 to 206 and 227 to 324; these read ETTKTQPAVSANTTNTDTSERFFS and GTKG…SQPR. Polar residues-rich tracts occupy residues 240–260 and 272–312; these read RRSTNSIAPLSLPDTSSNSKI and IACT…SSID. A helical membrane pass occupies residues 461–481; the sequence is MAVIIALTVAFIPWVKALFVT. Over 482–499 the chain is Cytoplasmic; the sequence is TANTPHISQAPDNAPPLS. The chain crosses the membrane as a helical span at residues 500–520; sequence FFMDFTGYVGAACVPFGLILL. Over 521–538 the chain is Extracellular; the sequence is GATLGRLKIGNLYPGFWK. The chain crosses the membrane as a helical span at residues 539 to 559; it reads AAVTLVILRQCVMPIFGVLWC. Residues 560–574 lie on the Cytoplasmic side of the membrane; it reads DRLVKAGWVNWQDDR. The chain crosses the membrane as a helical span at residues 575-595; the sequence is MLLFVIAISWNLPTMTTLIYF. Residues 596-614 lie on the Extracellular side of the membrane; that stretch reads TASFTPPETTAPIQMECVS. A helical membrane pass occupies residues 615–635; it reads FFLMLQYPLMVVSLPFLVSYF. The Cytoplasmic segment spans residues 636 to 642; that stretch reads LKVQMNL.

The protein belongs to the auxin efflux carrier (TC 2.A.69) family.

Its subcellular location is the membrane. This is an uncharacterized protein from Saccharomyces cerevisiae (strain ATCC 204508 / S288c) (Baker's yeast).